The sequence spans 266 residues: MPAITLTTLQSLKQKGEKITMLTCYDATFAHACNEAGVEVLLVGDSLGMVLQGHDSTLPVTTAEMAYHVASVKRGNSDALILADLPFMANATLEQTMTNSALLMQAGAHMVKVEGALWLADSIRLLAERGVPVCAHMGLTPQAVNILGGYKVQGRNENQARQMRADAISLEQAGAAMLLLECVPSELAAEITQAVKIPVIGIGAGSDTDGQVLVLHDMLGLSISGRVPKFVKNFMQGQDSIQSALKAYVSEVKATTFPGIEHGFSA.

2 residues coordinate Mg(2+): Asp45 and Asp84. 3-methyl-2-oxobutanoate-binding positions include 45–46, Asp84, and Lys112; that span reads DS. Glu114 contributes to the Mg(2+) binding site. The active-site Proton acceptor is the Glu181.

The protein belongs to the PanB family. In terms of assembly, homodecamer; pentamer of dimers. The cofactor is Mg(2+).

It is found in the cytoplasm. The catalysed reaction is 3-methyl-2-oxobutanoate + (6R)-5,10-methylene-5,6,7,8-tetrahydrofolate + H2O = 2-dehydropantoate + (6S)-5,6,7,8-tetrahydrofolate. The protein operates within cofactor biosynthesis; (R)-pantothenate biosynthesis; (R)-pantoate from 3-methyl-2-oxobutanoate: step 1/2. Functionally, catalyzes the reversible reaction in which hydroxymethyl group from 5,10-methylenetetrahydrofolate is transferred onto alpha-ketoisovalerate to form ketopantoate. This Pseudomonas fluorescens (strain Pf0-1) protein is 3-methyl-2-oxobutanoate hydroxymethyltransferase.